The primary structure comprises 506 residues: Chromodomain Y-like protein 2 (506 aa).

The Chromo domain maps to 7 to 67 (YEVERIVDKR…LHMSKDKRIK (61 aa)). A disordered region spans residues 64 to 177 (KRIKSGKQSS…RHFGNGSHQP (114 aa)). Basic and acidic residues predominate over residues 88-98 (KLSHRPSDPGK). Residues 101-120 (GTSHKRKRINPPLAKPKKGY) are compositionally biased toward basic residues. Residues 133 to 143 (KTVSYRTTPSG) are compositionally biased toward polar residues.

As to quaternary structure, interacts (via chromo domain) with histone H3K9me3. As to expression, ubiquitously expressed.

The protein localises to the nucleus. The protein is Chromodomain Y-like protein 2 (CDYL2) of Homo sapiens (Human).